The following is a 202-amino-acid chain: UPF0056 membrane protein PH0214 (202 aa).

Helical transmembrane passes span Ile-5–Val-25, Ile-47–Phe-67, Val-76–Val-96, Ile-104–Thr-124, Ile-135–Ile-155, and Ile-174–Ile-194.

The protein belongs to the UPF0056 (MarC) family.

The protein localises to the cell membrane. The chain is UPF0056 membrane protein PH0214 from Pyrococcus horikoshii (strain ATCC 700860 / DSM 12428 / JCM 9974 / NBRC 100139 / OT-3).